Here is a 277-residue protein sequence, read N- to C-terminus: Elongation factor 1-delta (277 aa).

Position 2 is an N-acetylalanine (Ala2). Lys17 is subject to N6-acetyllysine. Ser37, Ser44, Ser60, Ser86, and Ser106 each carry phosphoserine. Lys107 bears the N6-acetyllysine mark. Residues 113 to 171 (SALEKSSPAHRATTPQTQHVSPMRQVEPPSRKAATATEDDEDDDIDLFGSDEEEDKEAA) are disordered. Lys117 carries the post-translational modification N6-acetyllysine; alternate. Lys117 is modified (N6-succinyllysine; alternate). Ser119 carries the phosphoserine modification. The residue at position 129 (Thr129) is a Phosphothreonine. Ser133 carries the phosphoserine modification. Thr147 carries the post-translational modification Phosphothreonine. Over residues 149-168 (TEDDEDDDIDLFGSDEEEDK) the composition is skewed to acidic residues. Ser162 carries the phosphoserine; by CK2 modification.

It belongs to the EF-1-beta/EF-1-delta family. EF-1 is composed of 4 subunits: alpha, beta, delta, and gamma.

In terms of biological role, EF-1-beta and EF-1-delta stimulate the exchange of GDP bound to EF-1-alpha to GTP. The sequence is that of Elongation factor 1-delta (EEF1D) from Ovis aries (Sheep).